Reading from the N-terminus, the 567-residue chain is MGRGLLRGLWPLHIVLWTRIASTIPPHVPKSVNSDVMASDNGGAVKLPQLCKFCDVRLSTCDNQKSCMSNCSITAICEKPHEVCVAVWRKNDKNITLETVCHDPKLTYHGFTLEDAASPKCVMKEKKRAGETFFMCACNMEECNDYIIFSEEYTTSSPDLLLVIIQVTGVSLLPPLGIAIAVIIIFYCYRVHRQQKLSPSWESSKPRKLMDFSDNCAIILEDDRSDISSTCANNINHNTELLPIELDTLVGKGRFAEVYKAKLKQNTSEQFETVAVKIFPYEEYSSWKTEKDIFSDINLKHENILQFLTAEERKTELGKQYWLITAFHAKGNLQEYLTRHVISWEDLRKLGSSLARGIAHLHSDHTPCGRPKMPIVHRDLKSSNILVKNDLTCCLCDFGLSLRLDPTLSVDDLANSGQVGTARYMAPEVLESRMNLENVESFKQTDVYSMALVLWEMTSRCNAVGEVKDYEPPFGSKVREHPCVESMKDSVLRDRGRPEIPSFWLNHQGIQIVCETLTECWDHDPEARLTAQCVAERFSELEHPERLSGRSCSQEKIPEDGSLNTTK.

Residues 1–23 form the signal peptide; it reads MGRGLLRGLWPLHIVLWTRIAST. The Extracellular segment spans residues 24-166; sequence IPPHVPKSVN…SPDLLLVIIQ (143 aa). Cystine bridges form between C51–C84, C54–C71, C61–C67, C77–C101, C121–C136, and C138–C143. N-linked (GlcNAc...) asparagine glycosylation is found at N70 and N94. A helical membrane pass occupies residues 167-187; sequence VTGVSLLPPLGIAIAVIIIFY. Over 188 to 567 the chain is Cytoplasmic; the sequence is CYRVHRQQKL…PEDGSLNTTK (380 aa). The region spanning 244–546 is the Protein kinase domain; it reads IELDTLVGKG…RFSELEHPER (303 aa). ATP-binding positions include 250-258 and K277; that span reads VGKGRFAEV. D379 serves as the catalytic Proton acceptor. 3 positions are modified to phosphoserine: S409, S548, and S553. The disordered stretch occupies residues 545-567; sequence ERLSGRSCSQEKIPEDGSLNTTK.

This sequence belongs to the protein kinase superfamily. TKL Ser/Thr protein kinase family. TGFB receptor subfamily. As to quaternary structure, homodimer. Heterohexamer; TGFB1, TGFB2 and TGFB3 homodimeric ligands assemble a functional receptor composed of two TGFBR1 and TGFBR2 heterodimers to form a ligand-receptor heterohexamer. The respective affinity of TGFRB1 and TGFRB2 for the ligands may modulate the kinetics of assembly of the receptor and may explain the different biological activities of TGFB1, TGFB2 and TGFB3. Component of a complex composed of TSC22D1 (via N-terminus), TGFBR1 and TGFBR2; the interaction between TSC22D1 and TGFBR1 is inhibited by SMAD7 and promoted by TGFB1. Interacts with DAXX. Interacts with DYNLT4. Interacts with ZFYVE9; ZFYVE9 recruits SMAD2 and SMAD3 to the TGF-beta receptor. Interacts with and is activated by SCUBE3; this interaction does not affect TGFB1-binding to TGFBR2. Interacts with VPS39; this interaction is independent of the receptor kinase activity and of the presence of TGF-beta. Interacts with CLU. Mg(2+) is required as a cofactor. Requires Mn(2+) as cofactor. In terms of processing, phosphorylated on a Ser/Thr residue in the cytoplasmic domain. As to expression, widely expressed in adult. Expressed primarily in mesenchyme and epidermis of the midgestational fetus.

It is found in the cell membrane. The protein localises to the membrane raft. It carries out the reaction L-threonyl-[receptor-protein] + ATP = O-phospho-L-threonyl-[receptor-protein] + ADP + H(+). The enzyme catalyses L-seryl-[receptor-protein] + ATP = O-phospho-L-seryl-[receptor-protein] + ADP + H(+). Its function is as follows. Transmembrane serine/threonine kinase forming with the TGF-beta type I serine/threonine kinase receptor, TGFBR1, the non-promiscuous receptor for the TGF-beta cytokines TGFB1, TGFB2 and TGFB3. Transduces the TGFB1, TGFB2 and TGFB3 signal from the cell surface to the cytoplasm and is thus regulating a plethora of physiological and pathological processes including cell cycle arrest in epithelial and hematopoietic cells, control of mesenchymal cell proliferation and differentiation, wound healing, extracellular matrix production, immunosuppression and carcinogenesis. The formation of the receptor complex composed of 2 TGFBR1 and 2 TGFBR2 molecules symmetrically bound to the cytokine dimer results in the phosphorylation and the activation of TGFRB1 by the constitutively active TGFBR2. Activated TGFBR1 phosphorylates SMAD2 which dissociates from the receptor and interacts with SMAD4. The SMAD2-SMAD4 complex is subsequently translocated to the nucleus where it modulates the transcription of the TGF-beta-regulated genes. This constitutes the canonical SMAD-dependent TGF-beta signaling cascade. Also involved in non-canonical, SMAD-independent TGF-beta signaling pathways. Has transforming growth factor beta-activated receptor activity. The polypeptide is TGF-beta receptor type-2 (Tgfbr2) (Mus musculus (Mouse)).